Consider the following 160-residue polypeptide: MAISHTQLLLLLLVSLFFSPALCGPKFQTCDTGKEYPLKVSSVEISPDPVKRSGNGEITITGVTNKEISDGVTVNLKLAVGMFPVSTKSYSLCDITACPVAPGPIVLTLPNIFTPREKRTAIGYTIIISITDKPLKESMMCILFVVKLTGHASMINQVTE.

The signal sequence occupies residues 1-23; that stretch reads MAISHTQLLLLLLVSLFFSPALC.

In terms of assembly, interacts with SYT1. As to expression, expressed exclusively in roots, in epidermis and cortex cells of the root elongation zone, and lateral root cap cells at the root tip.

It is found in the cytoplasm. Involved in the regulation of gravitropic response and basipetal auxin transport in roots. Involved in salt stress tolerance. May facilitate membrane trafficking and asymmetric cell elongation via SYT1. Binds stigmasterol and dipalmitoyl phosphoethanolamine (DPPE) in vitro. The sequence is that of MD-2-related lipid-recognition protein ROSY1 from Arabidopsis thaliana (Mouse-ear cress).